We begin with the raw amino-acid sequence, 1664 residues long: DNA-directed RNA polymerase I subunit RPA190 (1664 aa).

The Zn(2+) site is built by cysteine 62, cysteine 65, cysteine 72, histidine 75, cysteine 102, cysteine 105, cysteine 233, and cysteine 236. The disordered stretch occupies residues 280–310 (QAKKLDGSNEASANDEESFDVGRNPTTRPKT). Mg(2+) contacts are provided by aspartate 627, aspartate 629, and aspartate 631. Phosphoserine is present on serine 889. Positions 992–1004 (PQEYYFHCMAGRE) are bridging helix. The interval 1343–1423 (DIGVAVPRLQ…DSDSEDEDVD (81 aa)) is disordered. Residues 1393–1414 (ETMREAEKSSDEEGIDSDKESD) are compositionally biased toward basic and acidic residues. Phosphoserine is present on serine 1636.

This sequence belongs to the RNA polymerase beta' chain family. Component of the RNA polymerase I (Pol I) complex consisting of 14 subunits: RPA135, RPA190, RPC40, RPA14, RPB5, RPO26, RPA43, RPB8, RPA12, RPB10, RPC19, RPC10, RPA49 and RPA34. The complex is composed of a horseshoe-shaped core containing ten subunits (RPA135, RPA190, RPB5, RPO26, RPB8, RPB10, RPC10, RPA12, RPC19 and RPC40) where RPA135 and RPA190 form the DNA-binding cleft. Outside of the core, RPA14 and RPA43 form the stalk that mediates interactions with transcription initiation factors and newly synthesized RNA.

The protein localises to the nucleus. It localises to the nucleolus. The enzyme catalyses RNA(n) + a ribonucleoside 5'-triphosphate = RNA(n+1) + diphosphate. In terms of biological role, DNA-dependent RNA polymerases catalyze the transcription of DNA into RNA using the four ribonucleoside triphosphates as substrates. Component of RNA polymerase I (Pol I) which synthesizes ribosomal RNA precursors. Besides, RNA polymerase I has intrinsic RNA cleavage activity. RPA190 and RPA135 both contribute to the polymerase catalytic activity and together form the Pol I active center. In addition, subunit RPA12 contributes a catalytic zinc ribbon that is required for RNA cleavage by Pol I. A single stranded DNA template strand of the promoter is positioned within the central active site cleft of Pol I. A bridging helix emanates from RPA190 and crosses the cleft near the catalytic site and is thought to promote translocation of Pol I by acting as a ratchet that moves the RNA-DNA hybrid through the active site by switching from straight to bent conformations at each step of nucleotide addition. The chain is DNA-directed RNA polymerase I subunit RPA190 (RPA190) from Saccharomyces cerevisiae (strain ATCC 204508 / S288c) (Baker's yeast).